We begin with the raw amino-acid sequence, 298 residues long: Aspartate carbamoyltransferase catalytic subunit (298 aa).

2 residues coordinate carbamoyl phosphate: arginine 50 and threonine 51. Lysine 79 is a binding site for L-aspartate. Carbamoyl phosphate contacts are provided by arginine 100, histidine 128, and glutamine 131. L-aspartate contacts are provided by arginine 160 and arginine 221. Carbamoyl phosphate-binding residues include leucine 260 and proline 261.

It belongs to the aspartate/ornithine carbamoyltransferase superfamily. ATCase family. In terms of assembly, heterooligomer of catalytic and regulatory chains.

The enzyme catalyses carbamoyl phosphate + L-aspartate = N-carbamoyl-L-aspartate + phosphate + H(+). The protein operates within pyrimidine metabolism; UMP biosynthesis via de novo pathway; (S)-dihydroorotate from bicarbonate: step 2/3. Catalyzes the condensation of carbamoyl phosphate and aspartate to form carbamoyl aspartate and inorganic phosphate, the committed step in the de novo pyrimidine nucleotide biosynthesis pathway. The polypeptide is Aspartate carbamoyltransferase catalytic subunit (Methanosphaerula palustris (strain ATCC BAA-1556 / DSM 19958 / E1-9c)).